The primary structure comprises 273 residues: 3-((Z)-2-isocyanoethenyl)-1H-indole synthase (273 aa).

The Fe cation site is built by His-105, Asp-107, and His-254.

Belongs to the TfdA dioxygenase family. Fe(2+) serves as cofactor.

The enzyme catalyses (2S)-3-(1H-indol-3-yl)-2-isocyanopropanoate + 2-oxoglutarate + O2 + H(+) = 3-[(Z)-2-isocyanoethenyl]-1H-indole + succinate + 2 CO2 + H2O. Involved in the biosynthesis of ambiguines, a family of hapalindole-type alkaloids. Responsible for the synthesis of Z-3-(2-isocyanoethen)-indole, a biosynthetic precursor to all ambiguines. The sequence is that of 3-((Z)-2-isocyanoethenyl)-1H-indole synthase from Fischerella ambigua (strain UTEX 1903).